Here is a 121-residue protein sequence, read N- to C-terminus: Flagellar protein FliT (121 aa).

Residues 1-50 (MNNAPHLYFAWQQLVEKSQLMLRLATEEQWDELIASEMAYVNAVQEIAHL) are required for homodimerization. The fliD binding stretch occupies residues 60 to 98 (MQEQLRPMLHLILDNESKVKQLLQIRMDELAKLVGQSSV).

Belongs to the FliT family. Homodimer. Interacts with FliD and FlhC.

Its subcellular location is the cytoplasm. It localises to the cytosol. Its function is as follows. Dual-function protein that regulates the transcription of class 2 flagellar operons and that also acts as an export chaperone for the filament-capping protein FliD. As a transcriptional regulator, acts as an anti-FlhDC factor; it directly binds FlhC, thus inhibiting the binding of the FlhC/FlhD complex to class 2 promoters, resulting in decreased expression of class 2 flagellar operons. As a chaperone, effects FliD transition to the membrane by preventing its premature polymerization, and by directing it to the export apparatus. This chain is Flagellar protein FliT, found in Shigella flexneri serotype 5b (strain 8401).